Here is a 477-residue protein sequence, read N- to C-terminus: MIRRLQDSGDLVRAFPRVHFVGIGGTGMSGIAEVMLTLGYEVSGSDNADNAATRRLAKLGARVMRGHSAANVLGTDCVVVSSAIREDNPELMEARSQRIPIMPRAAMLAELMRFRRGIAVAGTHGKTTTTSLAAAVLSEGGLDPTFVIGGQLLAAGANAKLGGGQWLVAEADESDGSFLRLNPLMAVITNIDADHLENYGNDFARVQAAFAEFLQRLPFYGLALLCIDDPEVAALAGKTPRHVMSYGMSENADVRAEDVVQDGPRMRFTLRLPEGTTTPVTLALPGRHNVLNALAAAAIGWQLGVAPDTIARALENFAGIGRRFNDLGEVTTASGARVRVVDDYGHHPRELEAVFAAARGGWPDKRLVVAFQPHRYSRTRDQFDAFAAVLSTVDALVLSEVYPAGEAPIPGADSRALARAIRARGRSEPVVVGQVAGLSEVLPDVLQDGDLLLMMGAGDIGYVAQQIVTDGFVGAPA.

ATP is bound at residue 122–128; sequence GTHGKTT.

The protein belongs to the MurCDEF family.

Its subcellular location is the cytoplasm. It carries out the reaction UDP-N-acetyl-alpha-D-muramate + L-alanine + ATP = UDP-N-acetyl-alpha-D-muramoyl-L-alanine + ADP + phosphate + H(+). Its pathway is cell wall biogenesis; peptidoglycan biosynthesis. Functionally, cell wall formation. In Xanthomonas campestris pv. campestris (strain 8004), this protein is UDP-N-acetylmuramate--L-alanine ligase.